We begin with the raw amino-acid sequence, 479 residues long: MVRMRRRRACSSGGACGCAAVRGARSFLSVRVLGMRIGMSALCLAPLFARTASLGAWSSQGGEVLGEVRARVPAHRRVRRAVSGTSVTPVVAMAAKTSEKQKGVGRRALSLRTGGRYEMLGLAFTALADDASFFEANAAGSAAFPYLLVGGFHFARVNQSHTDTIALVHSIGRTGYGFSASVQYPYLTMEGKAVGGVAIFNVAHRFLSAYRFKGISVGTNVKVGYRDSSAGGERNKKNQGGKKHVVVTADIGLQGTWSVAKNFGSHEPNLWVGGTVKNVGLSVEVDASNSGSSMSGGRTVHATNSSFILACAYQPIRWFLFGTGIEWKYNVQEFADNNRFRYGVAFLLLPVQYVAFGSNVFLTGLASDIRASAGVEFKSTWVRVDLTYTYESDKDEHVISCGIAGFFNRDRRKHLEKEVYTSYLRGLRHYDAQHYEEAIAEWRRTLQRAGSFEPAREGIERATKLLQLNRQVYDFHFLH.

Residues 1 to 49 (MVRMRRRRACSSGGACGCAAVRGARSFLSVRVLGMRIGMSALCLAPLFA) form the signal peptide.

The protein belongs to the UPF0164 family.

In Treponema pallidum (strain Nichols), this protein is UPF0164 protein TP_0865.